A 479-amino-acid polypeptide reads, in one-letter code: UDP-N-acetylmuramate--L-alanine ligase (479 aa).

Residue 127-133 participates in ATP binding; the sequence is GTHGKTT.

Belongs to the MurCDEF family.

The protein localises to the cytoplasm. It catalyses the reaction UDP-N-acetyl-alpha-D-muramate + L-alanine + ATP = UDP-N-acetyl-alpha-D-muramoyl-L-alanine + ADP + phosphate + H(+). It functions in the pathway cell wall biogenesis; peptidoglycan biosynthesis. In terms of biological role, cell wall formation. This chain is UDP-N-acetylmuramate--L-alanine ligase, found in Shewanella denitrificans (strain OS217 / ATCC BAA-1090 / DSM 15013).